Here is a 425-residue protein sequence, read N- to C-terminus: D-amino acid dehydrogenase 2 (425 aa).

An FAD-binding site is contributed by 3–17 (ITVVGAGIVGISTAY).

The protein belongs to the DadA oxidoreductase family. The cofactor is FAD.

The enzyme catalyses a D-alpha-amino acid + A + H2O = a 2-oxocarboxylate + AH2 + NH4(+). In terms of biological role, oxidative deamination of D-amino acids. This is D-amino acid dehydrogenase 2 (dadA2) from Ralstonia nicotianae (strain ATCC BAA-1114 / GMI1000) (Ralstonia solanacearum).